The primary structure comprises 25 residues: Androctonin (25 aa).

2 disulfide bridges follow: C4–C20 and C10–C16.

Its subcellular location is the secreted. Its function is as follows. Active against both bacteria (Gram-positive and Gram-negative) and filamentous fungi. Acts on the membrane of the bacterial cells. It destabilize a membrane by modifying its properties. The sequence is that of Androctonin from Androctonus australis (Sahara scorpion).